Consider the following 4841-residue polypeptide: Nonribosomal peptide synthetase 2 (4841 aa).

An adenylation 1 region spans residues 26–429 (VKPPNQNVAL…GRLSDGQVKL (404 aa)). The 74-residue stretch at 531–604 (EPVDEFESSL…DIIFAARRQI (74 aa)) folds into the Carrier 1 domain. S565 bears the O-(pantetheine 4'-phosphoryl)serine mark. The interval 640 to 1042 (EEIIPCTPLQ…ILERPTQEIK (403 aa)) is condensation 1. Residues 1072–1463 (FEDVVRKHPE…GRIDDQVKLR (392 aa)) are adenylation 2. One can recognise a Carrier 2 domain in the interval 1587–1665 (EGDWSRMDLV…QLAKHLEGKP (79 aa)). Position 1625 is an O-(pantetheine 4'-phosphoryl)serine (S1625). A condensation 2 region spans residues 1702 to 2043 (ILPCTPLQEA…QTVWELEADS (342 aa)). A Carrier 3 domain is found at 2139–2212 (SEVELDVRQV…KIAAKLLENR (74 aa)). S2173 is modified (O-(pantetheine 4'-phosphoryl)serine). The interval 2248–2663 (AVLPCTPLQS…NHLATEDEAF (416 aa)) is condensation 3. The segment at 2695 to 3090 (AAVHPNKLAL…GRADDQVKLR (396 aa)) is adenylation 3. A Carrier 4 domain is found at 3219 to 3293 (QDILVLLYDA…DLANCLAKAA (75 aa)). Residue S3253 is modified to O-(pantetheine 4'-phosphoryl)serine. Positions 3333–3735 (IAPCSPLQEG…DLAAESPQSE (403 aa)) are condensation 4. One can recognise a Carrier 5 domain in the interval 3759 to 3838 (QNSFEWTSEA…KMITELASIT (80 aa)). Residue S3799 is modified to O-(pantetheine 4'-phosphoryl)serine. A condensation 5 region spans residues 3873–4242 (SVLPPTHLQE…VEAEAVSDSL (370 aa)). The region spanning 4318–4394 (IEWNQNEIGI…EMAQKADTKL (77 aa)) is the Carrier 6 domain. S4355 carries the O-(pantetheine 4'-phosphoryl)serine modification. The condensation 6 stretch occupies residues 4430–4726 (EVLPALPMQV…DIHLITSESR (297 aa)).

This sequence belongs to the NRP synthetase family.

It participates in siderophore biosynthesis. Functionally, nonribosomal peptide synthetase; part of the gene cluster that mediates the biosynthesis of hydroxamate-containing siderophores that play a critical role in virulence. Gibberella zeae produces extracellular coprogen-type siderophores as well as the intracellular siderophore ferricrocin. The role of extracellular siderophores is to supply iron to the fungus during plant infection, and the intracellular ferricrocin is required for intracellular iron distribution and storage with a crucial role in ascus and ascospore development. SID1 catalyzes the conversion of L-ornithine to N(5)-hydroxyornithine, the first step in the biosynthesis of all hydroxamate-containing siderophores. The assembly of extracellular coprogen-type siderophores is performed by the nonribosomal peptide synthetase (NRPS) NPS6 whereas the intracellular siderophore ferricrocin is assembled by NPS2. This Gibberella zeae (strain ATCC MYA-4620 / CBS 123657 / FGSC 9075 / NRRL 31084 / PH-1) (Wheat head blight fungus) protein is Nonribosomal peptide synthetase 2.